Reading from the N-terminus, the 788-residue chain is Bifunctional purine biosynthetic protein ADE1 (788 aa).

Positions 1–429 (MSLRILLVGN…NRKDIAYKAF (429 aa)) are GARS. The 210-residue stretch at 114-323 (KDFMKKHNIP…LAEVMLACVE (210 aa)) folds into the ATP-grasp domain. 140 to 201 (VKKVGHRVVI…EEFLEGDELS (62 aa)) contacts ATP. Glutamate 291 and asparagine 293 together coordinate Mg(2+). An AIRS region spans residues 439–752 (ITYAQAGVSI…VVKQEKVAEV (314 aa)).

In the N-terminal section; belongs to the GARS family. The protein in the C-terminal section; belongs to the AIR synthase family. Mg(2+) is required as a cofactor. Requires Mn(2+) as cofactor.

Its subcellular location is the cytoplasm. It is found in the cytosol. The enzyme catalyses 5-phospho-beta-D-ribosylamine + glycine + ATP = N(1)-(5-phospho-beta-D-ribosyl)glycinamide + ADP + phosphate + H(+). The catalysed reaction is 2-formamido-N(1)-(5-O-phospho-beta-D-ribosyl)acetamidine + ATP = 5-amino-1-(5-phospho-beta-D-ribosyl)imidazole + ADP + phosphate + H(+). It functions in the pathway purine metabolism; IMP biosynthesis via de novo pathway; 5-amino-1-(5-phospho-D-ribosyl)imidazole from N(2)-formyl-N(1)-(5-phospho-D-ribosyl)glycinamide: step 2/2. Its pathway is purine metabolism; IMP biosynthesis via de novo pathway; N(1)-(5-phospho-D-ribosyl)glycinamide from 5-phospho-alpha-D-ribose 1-diphosphate: step 2/2. Its function is as follows. Catalyzes the second and fifth step in the 'de novo' purine biosynthesis pathway; contains phosphoribosylamine--glycine ligase (GARS) and phosphoribosylformylglycinamidine cyclo-ligase (AIRS) activities. This Yarrowia lipolytica (strain CLIB 122 / E 150) (Yeast) protein is Bifunctional purine biosynthetic protein ADE1.